The sequence spans 217 residues: Protein OPI10 homolog (217 aa).

This sequence belongs to the OPI10 family.

In Dictyostelium discoideum (Social amoeba), this protein is Protein OPI10 homolog.